The sequence spans 123 residues: MEPCELQNELVSAEGRNRKAVLCQRCGSRVLQPGTALFSRRQLFLPSMRKKPDLADGSNPDGDLLQEHWLVNDMFTFENVGFTKDVGNIKFLVCADCEIGPIGWHCLDDKNSFYVALERVSHE.

Met1 is subject to N-acetylmethionine. Residues 9–123 (ELVSAEGRNR…YVALERVSHE (115 aa)) form the MSS4 domain. Residues Cys23, Cys26, Cys94, and Cys97 each contribute to the Zn(2+) site.

Belongs to the DSS4/MSS4 family. In terms of assembly, interacts with RAB8A.

In terms of biological role, guanine-nucleotide-releasing protein that acts on members of the SEC4/YPT1/RAB subfamily. Stimulates GDP release from both YPT1, RAB3A and RAB10, but is less active on these proteins than on the SEC4 protein. Might play a general role in vesicular transport. This is Guanine nucleotide exchange factor MSS4 from Mus musculus (Mouse).